A 259-amino-acid polypeptide reads, in one-letter code: MTDLTASSLRALKLMDLTTLNDDDTNEKVIALCHQAKTPVGNTAAVCIYPRFIPIARKTLNAQGTPDVRIATVTNFPHGNDDIEIALAETRAAIAYGADEVDVVFPYRALIAGNEQVGFDLVKACKDACAAANVLLKVIIETGELKEEALIRKASEISIKAGADFIKTSTGKVPVNATPESARIMMEVIRDMGVSKTVGFKPAGGVRTAEDAQQFLAIADDLFGADWADSRHYRFGASSLLASLLKTLGHGDGKSASAY.

Catalysis depends on Asp102, which acts as the Proton donor/acceptor. Catalysis depends on Lys167, which acts as the Schiff-base intermediate with acetaldehyde. Catalysis depends on Lys201, which acts as the Proton donor/acceptor.

It belongs to the DeoC/FbaB aldolase family. DeoC type 2 subfamily.

It is found in the cytoplasm. The catalysed reaction is 2-deoxy-D-ribose 5-phosphate = D-glyceraldehyde 3-phosphate + acetaldehyde. It functions in the pathway carbohydrate degradation; 2-deoxy-D-ribose 1-phosphate degradation; D-glyceraldehyde 3-phosphate and acetaldehyde from 2-deoxy-alpha-D-ribose 1-phosphate: step 2/2. Its function is as follows. Catalyzes a reversible aldol reaction between acetaldehyde and D-glyceraldehyde 3-phosphate to generate 2-deoxy-D-ribose 5-phosphate. This Enterobacter sp. (strain 638) protein is Deoxyribose-phosphate aldolase.